Here is a 113-residue protein sequence, read N- to C-terminus: Tubulin-specific chaperone A (113 aa).

It belongs to the TBCA family. In terms of assembly, supercomplex made of cofactors A to E. Cofactors A and D function by capturing and stabilizing tubulin in a quasi-native conformation. Cofactor E binds to the cofactor D-tubulin complex; interaction with cofactor C then causes the release of tubulin polypeptides that are committed to the native state.

It localises to the cytoplasm. The protein localises to the cytoskeleton. Tubulin-folding protein; involved in the early step of the tubulin folding pathway. This Dictyostelium discoideum (Social amoeba) protein is Tubulin-specific chaperone A (tbca).